Consider the following 273-residue polypeptide: MSELSVSMSAAGGLPQAPLLPEAPAKVTVRNLNFYYGEHHALKNINLTLGTNRVTAFIGPSGCGKSTLLRIFNRMYDLYPGQRATGQLMLDQTNILDGKLDLNLLRARVGMVFQKPTPFPMTIYENIAFGIRLYEKISKSEMDDRVEKALRGGALWNEVKDKLNASGLSLSGGQQQRLCIARTVAVRPEVILFDEPCSALDPISTAKVEELIQELSENYTIAIVTHNMQQAARVSDKTAFMYLGELIEFDDTSKIFTSPSDRRTQDYITGRFG.

The ABC transporter domain maps to 27-268; it reads VTVRNLNFYY…PSDRRTQDYI (242 aa). 59-66 is a binding site for ATP; that stretch reads GPSGCGKS.

This sequence belongs to the ABC transporter superfamily. Phosphate importer (TC 3.A.1.7) family. The complex is composed of two ATP-binding proteins (PstB), two transmembrane proteins (PstC and PstA) and a solute-binding protein (PstS).

The protein localises to the cell inner membrane. The enzyme catalyses phosphate(out) + ATP + H2O = ADP + 2 phosphate(in) + H(+). In terms of biological role, part of the ABC transporter complex PstSACB involved in phosphate import. Responsible for energy coupling to the transport system. The chain is Phosphate import ATP-binding protein PstB from Bradyrhizobium diazoefficiens (strain JCM 10833 / BCRC 13528 / IAM 13628 / NBRC 14792 / USDA 110).